We begin with the raw amino-acid sequence, 721 residues long: Pentatricopeptide repeat-containing protein At3g49710 (721 aa).

14 PPR repeats span residues 42–72 (STYL…TEEP), 73–103 (NVFS…IPQP), 104–138 (DTVS…GFEV), 139–169 (DGFT…SGGF), 172–202 (YSSV…MDEL), 204–238 (DEVS…GFKI), 239–273 (DMFT…GFHQ), 274–307 (NSHV…ILSP), 308–343 (DLVV…GHRP), 344–378 (DDCS…HIPS), 380–410 (RISV…MPEL), 411–445 (NAVS…GIAP), 446–476 (NKIT…MKET), and 482–512 (EAEH…MPYK). The type E motif stretch occupies residues 517–592 (AWAALLGACR…KPGCSWIEVK (76 aa)). The interval 593–623 (KKKHVFVAEDWSHPMIREVNEYLEEMMKKMK) is type E(+) motif. A type DYW motif region spans residues 624-721 (KVGYVMDKKW…DGKCSCGDYW (98 aa)).

This sequence belongs to the PPR family. PCMP-H subfamily.

The polypeptide is Pentatricopeptide repeat-containing protein At3g49710 (PCMP-H79) (Arabidopsis thaliana (Mouse-ear cress)).